Here is a 678-residue protein sequence, read N- to C-terminus: Translation initiation factor eIF2B subunit epsilon (678 aa).

T172 is subject to Phosphothreonine. A disordered region spans residues 467-489 (STNELHLSDSESSETSSSSEEDM). Position 500 is a phosphoserine (S500). T503 carries the phosphothreonine modification. S506 carries the phosphoserine modification. The W2 domain occupies 508–674 (DFDEGDFNKE…NTAESESESE (167 aa)).

Belongs to the eIF-2B gamma/epsilon subunits family. As to quaternary structure, component of the translation initiation factor 2B (eIF2B) complex which is a heterodecamer of two sets of five different subunits: alpha, beta, gamma, delta and epsilon. Subunits alpha, beta and delta comprise a regulatory subcomplex and subunits epsilon and gamma comprise a catalytic subcomplex. Within the complex, the hexameric regulatory complex resides at the center, with the two heterodimeric catalytic subcomplexes bound on opposite sides.

The protein resides in the cytoplasm. It is found in the cytosol. Functionally, acts as a component of the translation initiation factor 2B (eIF2B) complex, which catalyzes the exchange of GDP for GTP on the eukaryotic initiation factor 2 (eIF2) complex gamma subunit. Its guanine nucleotide exchange factor activity is repressed when bound to eIF2 complex phosphorylated on the alpha subunit, thereby limiting the amount of methionyl-initiator methionine tRNA available to the ribosome and consequently global translation is repressed. The sequence is that of Translation initiation factor eIF2B subunit epsilon (tif225) from Schizosaccharomyces pombe (strain 972 / ATCC 24843) (Fission yeast).